Here is a 622-residue protein sequence, read N- to C-terminus: MKKNMFIAVVLSVLVLVGASFLQELLYPSASSSHSAAEHTLSAVPEETRTQSAHGGAADTQETTQPAAHPSGQVLVFPESETEERVERTYVVRTPLVQVTFTNRGGDILSYQLREHYAAQRREYVEMVEQARPDHRAFSLALGDEYAPNVNALFQVKQEIGARGVHSIGFYRSVATQHADGTRTPFVLAKRYVFYPDNYMFELHVSLSADVLEEREDSRQGAKVRAVAETNAGPATTVLARANGFDFGTASYTLRTPPEIGPERNAADKYEFRTFMVGAGGKAKTYALKGDGREQVDTPVSWASVSGKYFALIVLPNDADSLKRLVLSAPQAETAVQHHIAFVRRAVAQPAVADVYRVYIGPCAEQYLSAYNVASRNPYGLERTYIDAVAVSGGILYPLEVLLKWLLRLFYTLIPNWGVAIILVTIAIKVLFFPLTKRSFIAMQKMQELQPHMQRIQERYKGNTQKIHEEMAKLYREAQYNPLSGCLPTLVQMPIIFAMYRLFNNYFEFRGAMFIPYWIPDLSLADSVWTLPFALPVTQWTQMRMLPVLYVVSQIMFSKLTQVPHTEQQKTSMTIMTYVMPLFFFFFFYDAPSGLLVYWTAMNGVTLVQQLVMKRTANKNKT.

The helical transmembrane segment at 6–26 (FIAVVLSVLVLVGASFLQELL) threads the bilayer. Residues 37–71 (AEHTLSAVPEETRTQSAHGGAADTQETTQPAAHPS) form a disordered region. 4 consecutive transmembrane segments (helical) span residues 413-433 (LIPNWGVAIILVTIAIKVLFF), 483-503 (LSGCLPTLVQMPIIFAMYRLF), 513-533 (MFIPYWIPDLSLADSVWTLPF), and 579-599 (VMPLFFFFFFYDAPSGLLVYW).

The protein belongs to the OXA1/ALB3/YidC family. Type 1 subfamily. As to quaternary structure, interacts with the Sec translocase complex via SecD. Specifically interacts with transmembrane segments of nascent integral membrane proteins during membrane integration.

The protein resides in the cell inner membrane. Required for the insertion and/or proper folding and/or complex formation of integral membrane proteins into the membrane. Involved in integration of membrane proteins that insert both dependently and independently of the Sec translocase complex, as well as at least some lipoproteins. Aids folding of multispanning membrane proteins. This chain is Membrane protein insertase YidC, found in Treponema pallidum (strain Nichols).